The chain runs to 316 residues: Epoxide hydrolase 2 (316 aa).

Positions 25 to 302 constitute an AB hydrolase-1 domain; it reads PAVLFLHGFP…AAHFINQERP (278 aa). Asp-101 (nucleophile) is an active-site residue. An an epoxide-binding site is contributed by Tyr-150. Tyr-230 functions as the Proton donor in the catalytic mechanism. His-295 (proton acceptor) is an active-site residue.

The protein belongs to the AB hydrolase superfamily. Epoxide hydrolase family. Homodimer. Highly expressed in young fruits 15 days after anthesis (15-DAA). Also observed in stems and leaves.

The enzyme catalyses an epoxide + H2O = an ethanediol. The catalysed reaction is (24S)-24,25-epoxycucurbitadienol + H2O = (24R)-24,25-dihydroxycucurbitadienol. It functions in the pathway secondary metabolite biosynthesis; terpenoid biosynthesis. Functionally, epoxide hydrolase involved in the biosynthesis of cucurbitacin and mogroside tetracyclic triterpene natural products (e.g. siamenoside I and mogrosides IV, V and VI). Cucurbitacins have cytotoxic properties and exhibit deterrent taste as a defense barrier against herbivores. Mogrosides are nonsugar highly oxygenated compounds used as high-intensity zero-calorie sweeteners; they also possess pharmacological properties such as regulating immunity, lowering blood sugar and lipid levels, protecting the liver, and acting as antioxidants and antitumor agents. Catalyzes the hydrolysis of aromatic epoxide-containing substrates, such as the conversion of 24,25-epoxycucurbitadienol to 24,25-dihydroxycucurbitadienol. This Siraitia grosvenorii (Monk's fruit) protein is Epoxide hydrolase 2.